Reading from the N-terminus, the 462-residue chain is Gamma-aminobutyric acid receptor subunit alpha-5 (462 aa).

The first 31 residues, 1-31 (MDNGMFSGFIMIKNLLLFCISMNLSSHFGFS), serve as a signal peptide directing secretion. Residues 32–260 (QMPTSSVKDE…FHLKRKIGYF (229 aa)) are Extracellular-facing. Asn45 carries N-linked (GlcNAc...) asparagine glycosylation. Arg101 is a binding site for 4-aminobutanoate. Residue Asn145 is glycosylated (N-linked (GlcNAc...) asparagine). A 4-aminobutanoate-binding site is contributed by Thr164. Residues Cys173 and Cys187 are joined by a disulfide bond. Residues Asn207 and Asn236 are each glycosylated (N-linked (GlcNAc...) asparagine). A helical transmembrane segment spans residues 261–281 (VIQTYLPCIMTVILSQVSFWL). Residues 282-286 (NRESV) lie on the Cytoplasmic side of the membrane. Residues 287-308 (PARTVFGVTTVLTMTTLSISAR) traverse the membrane as a helical segment. Residues 309–318 (NSLPKVAYAT) are Extracellular-facing. A helical membrane pass occupies residues 319–340 (AMDWFIAVCYAFVFSALIEFAT). Residues 341–427 (VNYFTKRGWA…TYNSISKIDK (87 aa)) lie on the Cytoplasmic side of the membrane. Residue Lys355 forms a Glycyl lysine isopeptide (Lys-Gly) (interchain with G-Cter in ubiquitin) linkage. The interval 377–412 (FTTGKMSHPPNIPKEQTPAGTSNTTSVSVKPSEEKT) is disordered. Residues 428-448 (MSRIVFPVLFGTFNLVYWATY) form a helical membrane-spanning segment. Residues 449–462 (LNREPVIKGAASPK) lie on the Extracellular side of the membrane.

Belongs to the ligand-gated ion channel (TC 1.A.9) family. Gamma-aminobutyric acid receptor (TC 1.A.9.5) subfamily. GABRA5 sub-subfamily. In terms of assembly, heteropentamer, formed by a combination of alpha (GABRA1-6), beta (GABRB1-3), gamma (GABRG1-3), delta (GABRD), epsilon (GABRE), rho (GABRR1-3), pi (GABRP) and theta (GABRQ) chains, each subunit exhibiting distinct physiological and pharmacological properties.

It localises to the postsynaptic cell membrane. The protein resides in the cell membrane. The enzyme catalyses chloride(in) = chloride(out). Functionally, alpha subunit of the heteropentameric ligand-gated chloride channel gated by gamma-aminobutyric acid (GABA), a major inhibitory neurotransmitter in the brain. GABA-gated chloride channels, also named GABA(A) receptors (GABAAR), consist of five subunits arranged around a central pore and contain GABA active binding site(s) located at the alpha and beta subunit interface(s). When activated by GABA, GABAARs selectively allow the flow of chloride anions across the cell membrane down their electrochemical gradient. GABAARs containing alpha-5/GABRA5 subunits are mainly extrasynaptic and contribute to the tonic GABAergic inhibition in the hippocampus. Extrasynaptic alpha-5-containing GABAARs in CA1 pyramidal neurons play a role in learning and memory processes. The chain is Gamma-aminobutyric acid receptor subunit alpha-5 from Homo sapiens (Human).